We begin with the raw amino-acid sequence, 283 residues long: Hydroxyacylglutathione hydrolase-like protein (283 aa).

Zn(2+)-binding residues include His-54, His-56, Asp-58, His-59, His-110, Asp-134, and His-173.

This sequence belongs to the metallo-beta-lactamase superfamily. Glyoxalase II family. Zn(2+) is required as a cofactor.

Functionally, hydrolase acting on ester bonds. This is Hydroxyacylglutathione hydrolase-like protein (Haghl) from Mus musculus (Mouse).